Reading from the N-terminus, the 89-residue chain is DNA/RNA-binding protein Alba 2 (89 aa).

Lys-12 carries the N6-acetyllysine modification.

The protein belongs to the histone-like Alba family. Post-translationally, acetylated. Acetylation at Lys-12 decreases DNA-binding affinity.

Its subcellular location is the cytoplasm. It is found in the chromosome. In terms of biological role, binds double-stranded DNA tightly but without sequence specificity. Involved in DNA compaction. In Saccharolobus shibatae (strain ATCC 51178 / DSM 5389 / JCM 8931 / NBRC 15437 / B12) (Sulfolobus shibatae), this protein is DNA/RNA-binding protein Alba 2.